The primary structure comprises 80 residues: Probable small nuclear ribonucleoprotein G (80 aa).

In terms of domain architecture, Sm spans 5–76; sequence GQPPDLKKYM…IVTVEALEPV (72 aa).

Belongs to the snRNP Sm proteins family.

Its subcellular location is the nucleus. Probable common Sm protein, is found in U1 and U2 snRNPs and may be part of the spliceosome. This is Probable small nuclear ribonucleoprotein G from Arabidopsis thaliana (Mouse-ear cress).